The chain runs to 191 residues: Elongation factor P (191 aa).

Position 34 is an N6-(3,6-diaminohexanoyl)-5-hydroxylysine (Lys-34).

The protein belongs to the elongation factor P family. May be beta-lysylated on the epsilon-amino group of Lys-34 by the combined action of EpmA and EpmB, and then hydroxylated on the C5 position of the same residue by EpmC (if this protein is present). Lysylation is critical for the stimulatory effect of EF-P on peptide-bond formation. The lysylation moiety may extend toward the peptidyltransferase center and stabilize the terminal 3-CCA end of the tRNA. Hydroxylation of the C5 position on Lys-34 may allow additional potential stabilizing hydrogen-bond interactions with the P-tRNA.

Its subcellular location is the cytoplasm. It functions in the pathway protein biosynthesis; polypeptide chain elongation. Its function is as follows. Involved in peptide bond synthesis. Alleviates ribosome stalling that occurs when 3 or more consecutive Pro residues or the sequence PPG is present in a protein, possibly by augmenting the peptidyl transferase activity of the ribosome. Modification of Lys-34 is required for alleviation. The sequence is that of Elongation factor P from Marinomonas sp. (strain MWYL1).